Here is a 291-residue protein sequence, read N- to C-terminus: Probable 2-(5''-triphosphoribosyl)-3'-dephosphocoenzyme-A synthase (291 aa).

This sequence belongs to the CitG/MdcB family.

It catalyses the reaction 3'-dephospho-CoA + ATP = 2'-(5''-triphospho-alpha-D-ribosyl)-3'-dephospho-CoA + adenine. Functionally, involved in the formation of 2-(5''-phosphoribosyl)-3'-dephosphocoenzyme-A, the prosthetic group of the acyl-carrier protein of the malonate decarboxylase. The polypeptide is Probable 2-(5''-triphosphoribosyl)-3'-dephosphocoenzyme-A synthase (Pseudomonas syringae pv. syringae (strain B728a)).